The sequence spans 308 residues: Protein translocase subunit SecF (308 aa).

The next 6 membrane-spanning stretches (helical) occupy residues 12 to 32 (YFIF…TKGF), 127 to 147 (AKNA…YITI), 152 to 172 (IYAL…IGFI), 182 to 202 (PFIA…IVIF), 234 to 254 (VYTS…GGST), and 262 to 282 (LLVG…PLVY).

It belongs to the SecD/SecF family. SecF subfamily. In terms of assembly, forms a complex with SecD. Part of the essential Sec protein translocation apparatus which comprises SecA, SecYEG and auxiliary proteins SecDF. Other proteins may also be involved.

The protein localises to the cell inner membrane. Its function is as follows. Part of the Sec protein translocase complex. Interacts with the SecYEG preprotein conducting channel. SecDF uses the proton motive force (PMF) to complete protein translocation after the ATP-dependent function of SecA. This Sebaldella termitidis (strain ATCC 33386 / NCTC 11300) protein is Protein translocase subunit SecF.